The primary structure comprises 485 residues: MGPVMPPSKKPEGTGISVSSQCYRSSTLSNPLQDDDDLDFPPPPVKIHKEKGGMEDEELTNLNWLHENKNLLKSFGDTVLRSVSPVQDIDDDTPPSPAQSDMPYDAKQNPNCKPPYSFSCLIFMAVEDSPTKRLPVKDIYNWILEHFPYFANAPTGWKNSVRHNLSLNKCFKKVDKDRSQSIGKGSLWCIDPEYRQNLIQALKKTPYHPYSHVFNTPPTSPQAYQSTSVPPLWPGSTFFKKNGALLQDPDIDAASAMMLLNSAHELQAGFSPGVIQNGARVLNRGIFPGVRPLPINPIGAMAASVRNGIANCRTRMESEPSCGSPLVSSDPKDDHNYSSAKSANKRSSSPSDSISSSADDHYEFAAKVCREGSDISFQSHESFSETEEEDKKQIKKELKEPLVESGYSSQHKKKQHLLKLRRIPSDALPLKKRRTEKPPESDDEEMKEAAGSLLHLAGIRSCLNNITNRTAKGQKEQKDKETTKN.

Disordered stretches follow at residues 1 to 54 and 85 to 108; these read MGPV…KGGM and PVQD…DAKQ. Over residues 16-30 the composition is skewed to polar residues; it reads ISVSSQCYRSSTLSN. A DNA-binding region (fork-head) is located at residues 113-209; that stretch reads KPPYSFSCLI…QALKKTPYHP (97 aa). Disordered stretches follow at residues 316–357 and 401–449; these read MESE…ISSS and PLVE…MKEA. Over residues 338 to 357 the composition is skewed to low complexity; it reads SSAKSANKRSSSPSDSISSS. Residues 410-422 are compositionally biased toward basic residues; sequence QHKKKQHLLKLRR.

At early cleavage stages, localized within the animal half of the embryo. At gastrulation, expression expands over the whole embryo excluding the future endodermal cells of the blastopore. During neurulation, expressed in the prospective eye field and in the neural crest cells. Strongly enriched in the eye vesicles at stage 26. From stage 29 onwards, expressed predominantly in the eye, the branchial arches and the vagal ganglion. At stage 38, expressed throughout the head with strongest expression in the head mesenchyme and the eye lens.

The protein localises to the nucleus. Functionally, acts as a transcriptional repressor. May be involved in DNA damage-inducible cell cycle arrests (checkpoints). This chain is Forkhead box protein N3, found in Xenopus laevis (African clawed frog).